Here is an 846-residue protein sequence, read N- to C-terminus: Translation initiation factor IF-2 (846 aa).

The interval 198 to 219 (YKREEEEKKSKAKKAGGKGFKK) is disordered. Residues 207–219 (SKAKKAGGKGFKK) show a composition bias toward basic residues. Positions 345 to 512 (SRAPVVTIMG…AVLLQSEVLE (168 aa)) constitute a tr-type G domain. The G1 stretch occupies residues 354–361 (GHVDHGKT). 354 to 361 (GHVDHGKT) serves as a coordination point for GTP. The interval 379 to 383 (GITQH) is G2. A G3 region spans residues 400-403 (DTPG). GTP-binding positions include 400–404 (DTPGH) and 454–457 (NKID). The G4 stretch occupies residues 454 to 457 (NKID). The tract at residues 490–492 (SAK) is G5.

It belongs to the TRAFAC class translation factor GTPase superfamily. Classic translation factor GTPase family. IF-2 subfamily.

It localises to the cytoplasm. Functionally, one of the essential components for the initiation of protein synthesis. Protects formylmethionyl-tRNA from spontaneous hydrolysis and promotes its binding to the 30S ribosomal subunits. Also involved in the hydrolysis of GTP during the formation of the 70S ribosomal complex. This chain is Translation initiation factor IF-2, found in Francisella tularensis subsp. tularensis (strain SCHU S4 / Schu 4).